The sequence spans 111 residues: Large ribosomal subunit protein uL22 (111 aa).

This sequence belongs to the universal ribosomal protein uL22 family. In terms of assembly, part of the 50S ribosomal subunit.

This protein binds specifically to 23S rRNA; its binding is stimulated by other ribosomal proteins, e.g. L4, L17, and L20. It is important during the early stages of 50S assembly. It makes multiple contacts with different domains of the 23S rRNA in the assembled 50S subunit and ribosome. Its function is as follows. The globular domain of the protein is located near the polypeptide exit tunnel on the outside of the subunit, while an extended beta-hairpin is found that lines the wall of the exit tunnel in the center of the 70S ribosome. This Clostridioides difficile (strain 630) (Peptoclostridium difficile) protein is Large ribosomal subunit protein uL22.